Here is a 690-residue protein sequence, read N- to C-terminus: uncharacterized protein (690 aa).

The protein to M.genitalium MG366 and M.pneumoniae MPN544.

This is an uncharacterized protein from Ureaplasma parvum serovar 3 (strain ATCC 700970).